The primary structure comprises 239 residues: Cyclo(L-leucyl-L-phenylalanyl) synthase (239 aa).

The Nucleophile role is filled by Ser-37. Substrate contacts are provided by residues Asn-40, 178-182 (YVLAE), and Tyr-202.

Belongs to the CDPS family. In terms of assembly, monomer.

The catalysed reaction is L-phenylalanyl-tRNA(Phe) + L-leucyl-tRNA(Leu) = cyclo(L-phenylalanyl-L-leucyl) + tRNA(Phe) + tRNA(Leu) + H(+). Involved in the biosynthesis of albonoursin (cyclo[(alpha,beta-dehydro-Phe)-(alpha,beta-dehydro-Leu)]), an antibacterial peptide. It uses activated amino acids in the form of aminoacyl-tRNAs (aa-tRNAs) as substrates to catalyze the ATP-independent formation of cyclodipeptides which are intermediates in diketopiperazine (DKP) biosynthetic pathways. Catalyzes the formation of cyclo(L-Phe-L-Leu) (cFL) as major products from L-L-phenylalanyl-tRNA(Phe) and L-leucyl-tRNA(Leu). AlbC can also incorporate various nonpolar residues, such as L-phenylalanine, L-leucine, L-tyrosine and L-methionine, and to a much lesser extent L-alanine and L-valine, into cyclodipeptides. Indeed, ten possible cyclodipeptides composed of L-phenylalanine, L-leucine, L-tyrosine and L-methionine are all synthesized to detectable amounts by AlbC. This chain is Cyclo(L-leucyl-L-phenylalanyl) synthase (albC), found in Streptomyces noursei (Streptomyces albulus).